We begin with the raw amino-acid sequence, 120 residues long: Large ribosomal subunit protein uL18 (120 aa).

The interval 1–29 (MITKPNKNAGRKKRHAHVRRTLSGTPQRP) is disordered. Residues 9-20 (AGRKKRHAHVRR) show a composition bias toward basic residues.

This sequence belongs to the universal ribosomal protein uL18 family. As to quaternary structure, part of the 50S ribosomal subunit; part of the 5S rRNA/L5/L18/L25 subcomplex. Contacts the 5S and 23S rRNAs.

In terms of biological role, this is one of the proteins that bind and probably mediate the attachment of the 5S RNA into the large ribosomal subunit, where it forms part of the central protuberance. The polypeptide is Large ribosomal subunit protein uL18 (Shouchella clausii (strain KSM-K16) (Alkalihalobacillus clausii)).